A 4023-amino-acid polypeptide reads, in one-letter code: Hybrid PKS-NRPS synthetase pvhA (4023 aa).

The Ketosynthase family 3 (KS3) domain maps to 7–440; it reads DERIAVIGTG…GTNAHAIIEE (434 aa). Catalysis depends on for beta-ketoacyl synthase activity residues Cys-180, His-319, and His-360. Positions 550 to 871 are malonyl-CoA:ACP transacylase (MAT) domain; sequence VFTGQGAQWA…PYVGLLGRGK (322 aa). The tract at residues 945-1080 is N-terminal hotdog fold; it reads HPLLGKRCYD…GVVRATLAEN (136 aa). The segment at 945–1249 is dehydratase (DH) domain; sequence HPLLGKRCYD…QAEGLEIVPL (305 aa). The PKS/mFAS DH domain maps to 945 to 1255; sequence HPLLGKRCYD…IVPLAAAVPD (311 aa). His-978 serves as the catalytic Proton acceptor; for dehydratase activity. The tract at residues 1099 to 1255 is C-terminal hotdog fold; sequence DLSPVDTERF…IVPLAAAVPD (157 aa). Catalysis depends on Asp-1160, which acts as the Proton donor; for dehydratase activity. Residues 1402 to 1585 form a methyltransferase (MT) domain region; it reads AELYEKAIGF…GFSGTDTISP (184 aa). Positions 2120-2291 are ketoreductase (KR) domain; sequence TYLLVGLTGE…GVAGSSINIS (172 aa). A Carrier 1 domain is found at 2404-2479; it reads SIIKEVFLAR…GIIKQVVELL (76 aa). Residue Ser-2439 is modified to O-(pantetheine 4'-phosphoryl)serine. The segment at 2490-2580 is disordered; that stretch reads TPQTLSKNPA…VMSKPSASSQ (91 aa). Over residues 2502-2529 the composition is skewed to low complexity; that stretch reads PVKAPVSAPSTPAAASQPVLTDSTASSS. Positions 2565–2580 are enriched in polar residues; the sequence is PVNTPNVMSKPSASSQ. Residues 2604–3043 are condensation (C) domain; sequence PMSHGQEGFW…DIPSWSELDI (440 aa). Residues 3072 to 3467 form an adenylation (A) (KR) domain region; that stretch reads EMITVHGSTT…DGTLVVEGRL (396 aa). Residues 3593–3670 form the Carrier 2 domain; it reads SVLSGTERQL…AMADAVQKEV (78 aa). Residue Ser-3630 is modified to O-(pantetheine 4'-phosphoryl)serine. The tract at residues 3783-3932 is reductase (RED) domain; it reads ETDVIMHCVA…IAPVDDMAQS (150 aa).

It in the C-terminal section; belongs to the NRP synthetase family.

It functions in the pathway secondary metabolite biosynthesis. Functionally, hybrid PKS-NRPS synthetase; part of the gene cluster that mediates the biosynthesis of varicidin A, an antifungal natural product containing a cis-octahydrodecalin core. The PKS module of pvhA together with the enoylreductase pvhC catalyze the formation of the polyketide unit which is then conjugated to L-isoleucine by the condensation domain of the NRPS module. Activity of the Dieckmann cyclase domain (RED) of pvhA results in release of an acyclic tetramate. The cytochrome P450 monooxygenase pvhE then catalyzes the oxidation of the C21 methyl group to a to carboxylate group. The methyltransferase pvhD then further methylates the pvhE product. The Diels-Alderase pvhB is able to catalyze Diels-Alder cycloaddition using both pvhE and pvhD products as substrates to form the decalin ring, yielding varicidin B and A, respectively. This is Hybrid PKS-NRPS synthetase pvhA from Talaromyces variabilis (Penicillium variabile).